Reading from the N-terminus, the 559-residue chain is Kelch repeat and BTB domain-containing protein 2 (559 aa).

Residues 26–95 (CDVIITIGDG…LYNRHISSMN (70 aa)) enclose the BTB domain. The BACK domain occupies 128-223 (CIYIYHRLYE…CIDIQNLDKK (96 aa)). 3 Kelch repeats span residues 305-352 (EIII…VIDD), 353-399 (MIYA…VFDQ), and 401-463 (IYII…SHKD).

As to quaternary structure, interacts (via BTB domain) with host CUL3.

Its subcellular location is the host cytoplasm. Its function is as follows. Probable substrate-specific adapter of CUL3-containing E3 ubiquitin-protein ligases which mediate the ubiquitination and subsequent proteasomal degradation of host target proteins. The protein is Kelch repeat and BTB domain-containing protein 2 (KBTB2) of Mus musculus (Mouse).